The chain runs to 556 residues: Membrane protein insertase YidC (556 aa).

5 helical membrane-spanning segments follow: residues 6–26 (IVLY…WQID), 332–352 (LDLT…FSLM), 358–378 (VVGN…LAFY), 428–448 (LGGC…YWVL), and 501–521 (VMMF…SGLV).

Belongs to the OXA1/ALB3/YidC family. Type 1 subfamily. In terms of assembly, interacts with the Sec translocase complex via SecD. Specifically interacts with transmembrane segments of nascent integral membrane proteins during membrane integration.

It localises to the cell inner membrane. In terms of biological role, required for the insertion and/or proper folding and/or complex formation of integral membrane proteins into the membrane. Involved in integration of membrane proteins that insert both dependently and independently of the Sec translocase complex, as well as at least some lipoproteins. Aids folding of multispanning membrane proteins. The sequence is that of Membrane protein insertase YidC from Legionella pneumophila (strain Corby).